The following is an 81-amino-acid chain: Penaeidin-3j (81 aa).

Residues 1 to 19 form the signal peptide; the sequence is MRLVVCLVFLASFALVCQG. At Gln20 the chain carries Pyrrolidone carboxylic acid. Disulfide bonds link Cys50/Cys65, Cys54/Cys72, and Cys66/Cys73. Ser80 bears the Serine amide mark.

The protein belongs to the penaeidin family.

The protein localises to the cytoplasmic granule. In terms of biological role, antibacterial and antifungal activity. Presents chitin-binding activity. This chain is Penaeidin-3j, found in Penaeus vannamei (Whiteleg shrimp).